The sequence spans 274 residues: Cytochrome b-c1 complex subunit Rieske, mitochondrial (274 aa).

At Ser79–Ser103 the chain is on the mitochondrial matrix side. Residues Lys104–Met140 traverse the membrane as a helical segment. Residues Ser141–Gly274 are Mitochondrial intermembrane-facing. The Rieske domain occupies Glu187–Val272. [2Fe-2S] cluster is bound by residues Cys217, His219, Cys236, His239, and Ser241. A disulfide bridge links Cys222 with Cys238.

It belongs to the Rieske iron-sulfur protein family. Component of the ubiquinol-cytochrome c oxidoreductase (cytochrome b-c1 complex, complex III, CIII), a multisubunit enzyme composed of 11 subunits. The complex is composed of 3 respiratory subunits cytochrome b, cytochrome c1 and Rieske protein UQCRFS1, 2 core protein subunits UQCRC1/QCR1 and UQCRC2/QCR2, and 6 low-molecular weight protein subunits UQCRH/QCR6, UQCRB/QCR7, UQCRQ/QCR8, UQCR10/QCR9, UQCR11/QCR10 and subunit 9, the cleavage product of Rieske protein UQCRFS1. The complex exists as an obligatory dimer and forms supercomplexes (SCs) in the inner mitochondrial membrane with NADH-ubiquinone oxidoreductase (complex I, CI) and cytochrome c oxidase (complex IV, CIV), resulting in different assemblies (supercomplex SCI(1)III(2)IV(1) and megacomplex MCI(2)III(2)IV(2)). Incorporation of the Rieske protein UQCRFS1 is the penultimate step in complex III assembly. Interacts with TTC19, which is involved in the clearance of UQCRFS1 fragments. As to quaternary structure, component of the ubiquinol-cytochrome c oxidoreductase (cytochrome b-c1 complex, complex III, CIII). Subunit 9 corresponds to the mitochondrial targeting sequence (MTS) of Rieske protein UQCRFS1. It is retained after processing and incorporated inside complex III, where it remains bound to the complex and localizes between the 2 core subunits UQCRC1/QCR1 and UQCRC2/QCR2. It depends on [2Fe-2S] cluster as a cofactor. Post-translationally, proteolytic processing is necessary for the correct insertion of UQCRFS1 in the complex III dimer. Several fragments are generated during UQCRFS1 insertion, most probably due to the endogenous matrix-processing peptidase (MPP) activity of the 2 core protein subunits UQCRC1/QCR1 and UQCRC2/QCR2, which are homologous to the 2 mitochondrial-processing peptidase (MPP) subunits beta-MPP and alpha-MPP respectively. The action of the protease is also necessary for the clearance of the UQCRFS1 fragments.

The protein resides in the mitochondrion inner membrane. The catalysed reaction is a quinol + 2 Fe(III)-[cytochrome c](out) = a quinone + 2 Fe(II)-[cytochrome c](out) + 2 H(+)(out). Its function is as follows. Component of the ubiquinol-cytochrome c oxidoreductase, a multisubunit transmembrane complex that is part of the mitochondrial electron transport chain which drives oxidative phosphorylation. The respiratory chain contains 3 multisubunit complexes succinate dehydrogenase (complex II, CII), ubiquinol-cytochrome c oxidoreductase (cytochrome b-c1 complex, complex III, CIII) and cytochrome c oxidase (complex IV, CIV), that cooperate to transfer electrons derived from NADH and succinate to molecular oxygen, creating an electrochemical gradient over the inner membrane that drives transmembrane transport and the ATP synthase. The cytochrome b-c1 complex catalyzes electron transfer from ubiquinol to cytochrome c, linking this redox reaction to translocation of protons across the mitochondrial inner membrane, with protons being carried across the membrane as hydrogens on the quinol. In the process called Q cycle, 2 protons are consumed from the matrix, 4 protons are released into the intermembrane space and 2 electrons are passed to cytochrome c. The Rieske protein is a catalytic core subunit containing a [2Fe-2S] iron-sulfur cluster. It cycles between 2 conformational states during catalysis to transfer electrons from the quinol bound in the Q(0) site in cytochrome b to cytochrome c1. Incorporation of UQCRFS1 is the penultimate step in complex III assembly. Component of the ubiquinol-cytochrome c oxidoreductase (cytochrome b-c1 complex, complex III, CIII). UQCRFS1 undergoes proteolytic processing once it is incorporated in the complex III dimer. One of the fragments, called subunit 9, corresponds to its mitochondrial targeting sequence (MTS). The proteolytic processing is necessary for the correct insertion of UQCRFS1 in the complex III dimer, but the persistence of UQCRFS1-derived fragments may prevent newly imported UQCRFS1 to be processed and assembled into complex III and is detrimental for the complex III structure and function. This chain is Cytochrome b-c1 complex subunit Rieske, mitochondrial (Uqcrfs1), found in Rattus norvegicus (Rat).